We begin with the raw amino-acid sequence, 231 residues long: DNA mismatch repair protein MutH (231 aa).

It belongs to the MutH family.

Its subcellular location is the cytoplasm. Its function is as follows. Sequence-specific endonuclease that cleaves unmethylated GATC sequences. It is involved in DNA mismatch repair. In Pectobacterium atrosepticum (strain SCRI 1043 / ATCC BAA-672) (Erwinia carotovora subsp. atroseptica), this protein is DNA mismatch repair protein MutH.